A 387-amino-acid polypeptide reads, in one-letter code: GDSL esterase/lipase At2g23540 (387 aa).

Positions M1 to A32 are cleaved as a signal peptide. Catalysis depends on S55, which acts as the Nucleophile. 2 N-linked (GlcNAc...) asparagine glycosylation sites follow: N139 and N159. Residues D352 and H355 contribute to the active site. An N-linked (GlcNAc...) asparagine glycan is attached at N380.

It belongs to the 'GDSL' lipolytic enzyme family.

Its subcellular location is the secreted. The protein is GDSL esterase/lipase At2g23540 of Arabidopsis thaliana (Mouse-ear cress).